Here is a 318-residue protein sequence, read N- to C-terminus: Oxidoreductase swnN (318 aa).

It belongs to the NmrA-type oxidoreductase family. Isoflavone reductase subfamily.

The protein operates within mycotoxin biosynthesis. Functionally, aminotransferase; part of the gene cluster that mediates the biosynthesis of swainsonine (SW), a cytotoxic fungal alkaloid and a potential cancer therapy drug. Swainsonine production occurs via a multibranched pathway and is dispensable for fungal colonization of plants and infection of insect hosts. The first step of swainsonine biosynthesis is the production of the precursor pipecolic acid (PA) via conversion of L-lysine (Lys) to 1-piperideine-6-carboxylate (P6C) by the aminotransferase swnA, the latter being further reduced to PA by the reductase swnR. The PKS-NRPS hybrid synthetase swnK uptakes and condensates PA and malonyl-CoA with and without skipping of the ketoreductase (KR) domain in order to produce 3 intermediates, 1-oxoindolizidine, (1S)-1-hydroxyindolizin, and (1R)-1-hydroxyindolizine; with the transisomer (1S)-1-hydroxyindolizin being predominant. The terminal thioester reductase (TE) domain of swnK is involved in reduction of the thioester bond to release the intermediate aldehydes. The oxidoreductase swnN could contribute to the reduction of 1-oxoindolizidine to (1S)-1-hydroxyindolizin and (1R)-1-hydroxyindolizine, contributing to the major route of SW production. The dioxygenase swnH2 would be responsible for the oxidization of (1R)-1-hydroxyindolizine into (1R,2S)-1,2-dihydroxyindolizine and of (1S)-1-hydroxyindolizin to yield both (1R,2S)-1,2-dihydroxyindolizine and (1S,2S)-1,2-dihydroxyindolizine. The dioxygenase swnH1 then performs the conversion of the 1,2-dihydroxyindolizine epimers to SW. This Arthroderma benhamiae (strain ATCC MYA-4681 / CBS 112371) (Trichophyton mentagrophytes) protein is Oxidoreductase swnN.